A 333-amino-acid polypeptide reads, in one-letter code: 4-hydroxy-2-oxovalerate aldolase (333 aa).

The Pyruvate carboxyltransferase domain maps to 4 to 254 (VKIFDLTLRD…DCGIDLYKTM (251 aa)). 12-13 (RD) provides a ligand contact to substrate. D13 contributes to the Mn(2+) binding site. Catalysis depends on H16, which acts as the Proton acceptor. H193 is a binding site for substrate. Residues H193 and H195 each coordinate Mn(2+). Residue Y284 coordinates substrate.

This sequence belongs to the 4-hydroxy-2-oxovalerate aldolase family.

The catalysed reaction is (S)-4-hydroxy-2-oxopentanoate = acetaldehyde + pyruvate. The protein is 4-hydroxy-2-oxovalerate aldolase of Desulfitobacterium hafniense (strain DSM 10664 / DCB-2).